A 524-amino-acid chain; its full sequence is Peptide chain release factor 3 (524 aa).

Positions A11–G278 constitute a tr-type G domain. Residues S20 to T27, D88 to H92, and N142 to D145 contribute to the GTP site.

This sequence belongs to the TRAFAC class translation factor GTPase superfamily. Classic translation factor GTPase family. PrfC subfamily.

It localises to the cytoplasm. In terms of biological role, increases the formation of ribosomal termination complexes and stimulates activities of RF-1 and RF-2. It binds guanine nucleotides and has strong preference for UGA stop codons. It may interact directly with the ribosome. The stimulation of RF-1 and RF-2 is significantly reduced by GTP and GDP, but not by GMP. This chain is Peptide chain release factor 3, found in Lacticaseibacillus casei (strain BL23) (Lactobacillus casei).